The primary structure comprises 59 residues: Large ribosomal subunit protein bL32 (59 aa).

Residues 1-59 (MAVQQNRKTPSKRGMRRSHDSLSKPTLSTEQNTGETHRRHHISADGYYRGRKVTRGQDD) are disordered. The span at 23–34 (SKPTLSTEQNTG) shows a compositional bias: polar residues. Residues 49-59 (RGRKVTRGQDD) are compositionally biased toward basic residues.

It belongs to the bacterial ribosomal protein bL32 family.

The polypeptide is Large ribosomal subunit protein bL32 (Halorhodospira halophila (strain DSM 244 / SL1) (Ectothiorhodospira halophila (strain DSM 244 / SL1))).